Reading from the N-terminus, the 235-residue chain is UPF0749 protein YlxX (235 aa).

Residues 6–26 (SFISISVLMVIFGLMISVQFN) traverse the membrane as a helical segment.

Belongs to the UPF0749 family.

It is found in the cell membrane. The sequence is that of UPF0749 protein YlxX (ylxX) from Bacillus subtilis (strain 168).